We begin with the raw amino-acid sequence, 385 residues long: Ribosomal RNA large subunit methyltransferase G (385 aa).

The protein belongs to the methyltransferase superfamily. RlmG family.

It is found in the cytoplasm. The enzyme catalyses guanosine(1835) in 23S rRNA + S-adenosyl-L-methionine = N(2)-methylguanosine(1835) in 23S rRNA + S-adenosyl-L-homocysteine + H(+). Specifically methylates the guanine in position 1835 (m2G1835) of 23S rRNA. The sequence is that of Ribosomal RNA large subunit methyltransferase G from Vibrio parahaemolyticus serotype O3:K6 (strain RIMD 2210633).